Consider the following 274-residue polypeptide: Thiamine kinase (274 aa).

This sequence belongs to the thiamine kinase family.

The enzyme catalyses thiamine + ATP = thiamine phosphate + ADP + H(+). Its pathway is cofactor biosynthesis; thiamine diphosphate biosynthesis; thiamine phosphate from thiamine: step 1/1. Catalyzes the ATP-dependent phosphorylation of thiamine to thiamine phosphate. Is involved in thiamine salvage. This chain is Thiamine kinase, found in Escherichia coli (strain K12 / MC4100 / BW2952).